The sequence spans 186 residues: Imidazole glycerol phosphate synthase subunit HisH (186 aa).

A Glutamine amidotransferase type-1 domain is found at 1-186 (MIAIIDYGSG…KLLRNFGELA (186 aa)). The active-site Nucleophile is the cysteine 72. Active-site residues include histidine 167 and glutamate 169.

Heterodimer of HisH and HisF.

It is found in the cytoplasm. It carries out the reaction 5-[(5-phospho-1-deoxy-D-ribulos-1-ylimino)methylamino]-1-(5-phospho-beta-D-ribosyl)imidazole-4-carboxamide + L-glutamine = D-erythro-1-(imidazol-4-yl)glycerol 3-phosphate + 5-amino-1-(5-phospho-beta-D-ribosyl)imidazole-4-carboxamide + L-glutamate + H(+). The enzyme catalyses L-glutamine + H2O = L-glutamate + NH4(+). The protein operates within amino-acid biosynthesis; L-histidine biosynthesis; L-histidine from 5-phospho-alpha-D-ribose 1-diphosphate: step 5/9. In terms of biological role, IGPS catalyzes the conversion of PRFAR and glutamine to IGP, AICAR and glutamate. The HisH subunit catalyzes the hydrolysis of glutamine to glutamate and ammonia as part of the synthesis of IGP and AICAR. The resulting ammonia molecule is channeled to the active site of HisF. The protein is Imidazole glycerol phosphate synthase subunit HisH of Picrophilus torridus (strain ATCC 700027 / DSM 9790 / JCM 10055 / NBRC 100828 / KAW 2/3).